Reading from the N-terminus, the 289-residue chain is Purine nucleoside phosphorylase (289 aa).

At Met-1 the chain carries N-acetylmethionine. Phosphate is bound by residues Ser-33, His-64, and 84 to 86 (RFH). Tyr-88 lines the a purine D-ribonucleoside pocket. Ala-116 provides a ligand contact to phosphate. 2 residues coordinate a purine D-ribonucleoside: Glu-201 and Met-219. Position 220 (Ser-220) interacts with phosphate. The a purine D-ribonucleoside site is built by Asn-243 and His-257.

Belongs to the PNP/MTAP phosphorylase family. Homotrimer.

Its subcellular location is the cytoplasm. It catalyses the reaction inosine + phosphate = alpha-D-ribose 1-phosphate + hypoxanthine. The catalysed reaction is guanosine + phosphate = alpha-D-ribose 1-phosphate + guanine. It carries out the reaction 2'-deoxyguanosine + phosphate = 2-deoxy-alpha-D-ribose 1-phosphate + guanine. The enzyme catalyses 2'-deoxyinosine + phosphate = 2-deoxy-alpha-D-ribose 1-phosphate + hypoxanthine. It participates in purine metabolism; purine nucleoside salvage. Catalyzes the phosphorolytic breakdown of the N-glycosidic bond in the beta-(deoxy)ribonucleoside molecules, with the formation of the corresponding free purine bases and pentose-1-phosphate. Preferentially acts on 6-oxopurine nucleosides including inosine and guanosine. This chain is Purine nucleoside phosphorylase (Pnp), found in Mus musculus (Mouse).